A 1693-amino-acid chain; its full sequence is uncharacterized protein (1693 aa).

WD repeat units follow at residues 1008–1042, 1053–1083, 1094–1124, 1135–1165, 1176–1206, 1217–1247, 1258–1288, 1299–1329, 1340–1370, 1381–1411, 1422–1452, 1463–1493, 1504–1534, 1545–1575, 1586–1616, and 1627–1657; these read HHEGPVTVLRISPSMENTPPLVLTATTNGIAYLWS, GHQEAITALDWSADGQYFATASADHTVKLWQ, GHEDWVRSVHFSPHHQFLVTSGQDNTARIWN, GHADWVRNAEFNCHGQILLTASRDGTARLWD, GHTSWVRNAQFSPDGQWIVTCSADGTARLWD, GHQNWVNNALWSPDGQHIITSSSDGTARVWS, GHDHNIHGARFSLDGQKIVTYSTDNTARLWT, GHQKEVYDADFSADGRFVFTVSADQTARQWD, GHSHWVRNAHFNPKGDRLLTVSRDKTARLWT, DHQGWVREGQFSPDGQWIVTGSADKTAQLWN, GHQDAVLNVRFSPDSQYIVTASKDGTARVWN, HYEKNIFAAEFSADGQFIVTASDDNTAGIWE, GHEGPVYFAQFSADSRYILTASVDNTARIWD, GHQSIVYQARFSPEGNLIATVSADHTARLWD, GHQGLVGTVDWSPDGQMLVTASNDGTARLWD, and GHGNWVRSAEFSPDGRWVLTSSADGTAKLWP.

This is an uncharacterized protein from Synechocystis sp. (strain ATCC 27184 / PCC 6803 / Kazusa).